A 394-amino-acid polypeptide reads, in one-letter code: Flap endonuclease 1-A (394 aa).

The tract at residues 1–105 (MGIKGLTKLI…RELAKRFARR (105 aa)) is N-domain. Residue Asp34 coordinates Mg(2+). Residue Arg71 coordinates DNA. Mg(2+) is bound by residues Asp87, Glu159, Glu161, Asp180, and Asp182. The I-domain stretch occupies residues 123–254 (DVEKYSKKTV…QTALKMIRQH (132 aa)). A DNA-binding site is contributed by Glu159. Positions 232 and 234 each coordinate DNA. Position 234 (Asp234) interacts with Mg(2+). The tract at residues 338–346 (SQGRLESFF) is interaction with PCNA. Positions 343–394 (ESFFGVSSSSSNKRKEAPDSEASAGKQVKTAAAVKPAKAASKKGPAKGGKKK) are disordered. Over residues 368-381 (KQVKTAAAVKPAKA) the composition is skewed to low complexity. Basic residues predominate over residues 382–394 (ASKKGPAKGGKKK).

It belongs to the XPG/RAD2 endonuclease family. FEN1 subfamily. As to quaternary structure, interacts with PCNA. Three molecules of FEN1 bind to one PCNA trimer with each molecule binding to one PCNA monomer. PCNA stimulates the nuclease activity without altering cleavage specificity. Mg(2+) is required as a cofactor. Post-translationally, phosphorylated. Phosphorylation upon DNA damage induces relocalization to the nuclear plasma.

The protein resides in the nucleus. It is found in the nucleolus. The protein localises to the nucleoplasm. It localises to the mitochondrion. Its function is as follows. Structure-specific nuclease with 5'-flap endonuclease and 5'-3' exonuclease activities involved in DNA replication and repair. During DNA replication, cleaves the 5'-overhanging flap structure that is generated by displacement synthesis when DNA polymerase encounters the 5'-end of a downstream Okazaki fragment. It enters the flap from the 5'-end and then tracks to cleave the flap base, leaving a nick for ligation. Also involved in the long patch base excision repair (LP-BER) pathway, by cleaving within the apurinic/apyrimidinic (AP) site-terminated flap. Acts as a genome stabilization factor that prevents flaps from equilibrating into structures that lead to duplications and deletions. Also possesses 5'-3' exonuclease activity on nicked or gapped double-stranded DNA, and exhibits RNase H activity. Also involved in replication and repair of rDNA and in repairing mitochondrial DNA. This is Flap endonuclease 1-A from Physcomitrium patens (Spreading-leaved earth moss).